The sequence spans 1043 residues: MMNNHFHLQHDHPPQNVAHPFMQQPSTAVPSAPPATYGYLAQPAGQQPQWMTTTYQILPPSVGPATVAKRYYATTGPQTTHPTHPSTIQITNSFAQQSTPPKQQAATSCSPFKANNIRIISTAPSVYSLNKPPQEAHSTYAPVQSYYLPSGGGQTAGQINLLAASGTGKQLQPPPLVPVTNSTSPPSTVVLDRINICINNHYTETPTSLSSSLTTAQQPSPIIPAIQHKAILPLIDSSTADSSSCSSSSVSSSSYSGTATTSAAVVIVDEPDSTTTTPQTPPTTPEAMSSPGKSSPSPPLLATQSLLKGVNSMKPSFKTVEAAPPTPPTPPSPPPPPPAPPVAAPSPAVTYALQEDVFIKCNDGRFYLGTIIDQTSDQYLIRFDDQSEQWCEPDKLRKLGGGSSITAGGGGASTTESTNTSPSGPMCVACKRSDIEDVVEICERCGRGYHRGCTVEIVTGSGIWSCKRCAKPMKMQQPVSHKITKPAGICRQLPYHADKLSWDEKHRVNEEQIYCYCGKPGKFDHNMLQCCKCRNWFHTQCMQNFKKKLLRGDMFFVFCCTVCNNGIEFVRRMQIEWVDVLHIALYNLRKHQHQKYHHLLNDIWPFILEQRHQLPICEKWRTLPETALMERLKQTLKDYSDRFVCGREFKRAPAFYALRHSGPPHIPKVFLEPHEELSDELLEKRFKLMLMPEEPDEGANELPKRVPKDVYEFNTDEDDPVETSEDEIPIKQIIEKAKKQAAQKADKHDELPLKPDLADDNANDGDPGKLPAPIPPLLDANSSRKRKAFRLSKRYDNSRNHCDLSSDENSSSSRGTSSLDLIIPPPVNFLGRNNPFLMATPKKASQGRSISVGTGVGVNGIINSIFKLKGTSKEQPRMVRTIKRRLSAKDITIGPNQEVRRRRTRRLTTAIEVISTTTINPIPSHYLPIYAKDLQPPAPPMGKPTHGRLLRQRPQKQSPSQSRRNSTSSTATSSSSNGIGAPGHSMLDLKQSVNKYFGGAMNRIDAGEPFAIRAKRRMGNGQVQYLVEWGGDTATTAIGLLGN.

Disordered stretches follow at residues 1-34, 271-302, 317-346, and 395-422; these read MMNN…SAPP, PDST…PLLA, FKTV…AAPS, and KLRK…NTSP. Residues 25-34 show a composition bias toward low complexity; sequence PSTAVPSAPP. The span at 324–344 shows a compositional bias: pro residues; it reads PPTPPTPPSPPPPPPAPPVAA. Residues 349-404 form the Tudor domain; that stretch reads VTYALQEDVFIKCNDGRFYLGTIIDQTSDQYLIRFDDQSEQWCEPDKLRKLGGGSS. Positions 399–412 are enriched in gly residues; the sequence is LGGGSSITAGGGGA. 2 PHD-type zinc fingers span residues 424-472 and 512-560; these read GPMC…CAKP and QIYC…VFCC. The span at 737–757 shows a compositional bias: basic and acidic residues; sequence AKKQAAQKADKHDELPLKPDL. Disordered regions lie at residues 737–819 and 931–985; these read AKKQ…TSSL and AKDL…PGHS. The span at 783-792 shows a compositional bias: basic residues; sequence SRKRKAFRLS. The span at 793–804 shows a compositional bias: basic and acidic residues; the sequence is KRYDNSRNHCDL. Phosphoserine occurs at positions 805 and 806. Over residues 807–819 the composition is skewed to low complexity; it reads DENSSSSRGTSSL. Residues 945 to 954 are compositionally biased toward basic residues; it reads THGRLLRQRP. A compositionally biased stretch (low complexity) spans 955–977; it reads QKQSPSQSRRNSTSSTATSSSSN.

The protein belongs to the Polycomblike family. Component of a form of the Esc/E(z) complex present specifically during early embryogenesis which is composed of Caf1-55, esc, E(z), Su(z)12, Pcl and HDAC1/Rpd3. This complex is distinct from the PRC1 complex, which contains many other PcG proteins like Pc, Ph, Psc, Su(z)2. The two complexes however cooperate and interact together during the first 3 hours of development to establish PcG silencing. Interacts with corto in vitro.

It localises to the nucleus. It is found in the chromosome. In terms of biological role, polycomb group (PcG) protein. While PcG proteins are generally required to maintain the transcriptionally repressive state of homeotic genes throughout development, this protein is specifically required during the first 6 hours of embryogenesis to establish the repressed state. Component of the Esc/E(z) complex, which methylates 'Lys-9' and 'Lys-27' residues of histone H3, leading to transcriptional repression of the affected target gene. The Esc/E(z) complex is necessary but not sufficient for the repression of homeotic target genes, suggesting that the recruitment of the distinct PRC1 complex is also required. Required for the correct spatial expression of the homeotic genes of the Antennapedia and Bithorax complexes. The chain is Polycomb protein Pcl (Pcl) from Drosophila melanogaster (Fruit fly).